The sequence spans 101 residues: Small ribosomal subunit protein bS18c (101 aa).

The protein belongs to the bacterial ribosomal protein bS18 family. In terms of assembly, part of the 30S ribosomal subunit.

It localises to the plastid. The protein localises to the chloroplast. The polypeptide is Small ribosomal subunit protein bS18c (Gossypium hirsutum (Upland cotton)).